The chain runs to 421 residues: 3-isopropylmalate dehydratase large subunit (421 aa).

3 residues coordinate [4Fe-4S] cluster: Cys-302, Cys-362, and Cys-365.

This sequence belongs to the aconitase/IPM isomerase family. LeuC type 2 subfamily. Heterodimer of LeuC and LeuD. It depends on [4Fe-4S] cluster as a cofactor.

The enzyme catalyses (2R,3S)-3-isopropylmalate = (2S)-2-isopropylmalate. It participates in amino-acid biosynthesis; L-leucine biosynthesis; L-leucine from 3-methyl-2-oxobutanoate: step 2/4. Functionally, catalyzes the isomerization between 2-isopropylmalate and 3-isopropylmalate, via the formation of 2-isopropylmaleate. The sequence is that of 3-isopropylmalate dehydratase large subunit from Nitratiruptor sp. (strain SB155-2).